Consider the following 423-residue polypeptide: Ankyrin repeat and SAM domain-containing protein 4B (423 aa).

The interval 1-251 (MSTRYHQAAS…PKDFKEKLHF (251 aa)) is mediates localization to microvilli. 3 ANK repeats span residues 31–60 (DGMTPTLLAAYHGNLEALEIICSRGGDPDK), 64–93 (WGNTPLHYAASNGHTHCISFLVNFGANIFA), and 97–126 (DLKSPLDAAASREQKECVALLDKAATVQNT). Residues 130–169 (KRVTRLKEQALKNARKQMKECERLQERHQNKMARTYSKED) are a coiled coil. 3 disordered regions span residues 158–181 (QNKMARTYSKEDSGTISSSHSTLS), 207–227 (KSKKNKDTTEQLEKDGRSGQR), and 303–335 (QRQGAAGTVEEEEEEEEEEEEEKREANGTAGDL). The segment covering 171–181 (GTISSSHSTLS) has biased composition (low complexity). A compositionally biased stretch (basic and acidic residues) spans 207-224 (KSKKNKDTTEQLEKDGRS). Residues 253–352 (VEEDDDVQHE…EWEEDAVDAT (100 aa)) form a mediates interaction with MYO7B region. A coiled-coil region spans residues 301 to 335 (LFQRQGAAGTVEEEEEEEEEEEEEKREANGTAGDL). Acidic residues predominate over residues 311–324 (VEEEEEEEEEEEEE). Residues 357–409 (FLQSQHLEEFLPIFMREQIDLEALLLCSDEDLQNIHMQLGPRKKVLSAIDKRK) enclose the SAM domain. A PDZ-binding; mediates interaction with USH1C motif is present at residues 421-423 (TSL).

In terms of assembly, part of the IMAC/intermicrovillar adhesion complex/intermicrovillar tip-link complex composed of ANKS4B, MYO7B, USH1C, CDHR2 and CDHR5. Interacts with USH1C; the interaction is direct and is required for ANKS4B localization to the tip of microvilli. Interacts with MYO7B; the interaction is direct. May interact with HSPA5. Cochlea, kidney, lung, liver, pancreas, salivary gland and small intestine (at protein level). Expressed in kidney, small intestine, pancreas, liver and colon. Not detected in heart, spleen and brain.

It is found in the cell projection. The protein resides in the microvillus. Its function is as follows. As part of the intermicrovillar adhesion complex/IMAC plays a role in epithelial brush border differentiation, controlling microvilli organization and length. Plays a role in assembly of the complex. May play a role in cellular response to endoplasmic reticulum stress. The protein is Ankyrin repeat and SAM domain-containing protein 4B of Mus musculus (Mouse).